The following is a 375-amino-acid chain: Queuine tRNA-ribosyltransferase (375 aa).

Asp89 acts as the Proton acceptor in catalysis. Substrate is bound by residues 89-93 (DSGGF), Asp143, Gln187, and Gly214. The interval 245 to 251 (GVGKPED) is RNA binding. Residue Asp264 is the Nucleophile of the active site. An RNA binding; important for wobble base 34 recognition region spans residues 269–273 (TRNAR). 4 residues coordinate Zn(2+): Cys302, Cys304, Cys307, and His333.

Belongs to the queuine tRNA-ribosyltransferase family. Homodimer. Within each dimer, one monomer is responsible for RNA recognition and catalysis, while the other monomer binds to the replacement base PreQ1. Zn(2+) serves as cofactor.

It catalyses the reaction 7-aminomethyl-7-carbaguanine + guanosine(34) in tRNA = 7-aminomethyl-7-carbaguanosine(34) in tRNA + guanine. Its pathway is tRNA modification; tRNA-queuosine biosynthesis. Functionally, catalyzes the base-exchange of a guanine (G) residue with the queuine precursor 7-aminomethyl-7-deazaguanine (PreQ1) at position 34 (anticodon wobble position) in tRNAs with GU(N) anticodons (tRNA-Asp, -Asn, -His and -Tyr). Catalysis occurs through a double-displacement mechanism. The nucleophile active site attacks the C1' of nucleotide 34 to detach the guanine base from the RNA, forming a covalent enzyme-RNA intermediate. The proton acceptor active site deprotonates the incoming PreQ1, allowing a nucleophilic attack on the C1' of the ribose to form the product. After dissociation, two additional enzymatic reactions on the tRNA convert PreQ1 to queuine (Q), resulting in the hypermodified nucleoside queuosine (7-(((4,5-cis-dihydroxy-2-cyclopenten-1-yl)amino)methyl)-7-deazaguanosine). The sequence is that of Queuine tRNA-ribosyltransferase from Salmonella enteritidis PT4 (strain P125109).